Reading from the N-terminus, the 185-residue chain is Dual-action ribosomal maturation protein DarP (185 aa).

The interval 1 to 22 (MWKNGAMRGCNKETGEFLGPSR) is disordered.

This sequence belongs to the DarP family.

It localises to the cytoplasm. Member of a network of 50S ribosomal subunit biogenesis factors which assembles along the 30S-50S interface, preventing incorrect 23S rRNA structures from forming. Promotes peptidyl transferase center (PTC) maturation. The sequence is that of Dual-action ribosomal maturation protein DarP from Xylella fastidiosa (strain 9a5c).